Here is a 338-residue protein sequence, read N- to C-terminus: UDP-glucose 4-epimerase (338 aa).

NAD(+) is bound by residues 11–12 (YI), 31–36 (DNLCNS), 58–59 (DI), 80–84 (FAGLK), Asn99, Ser124, Tyr149, Lys153, and Phe178. Substrate contacts are provided by Ser124 and Tyr149. Tyr149 (proton acceptor) is an active-site residue. Residues Asn179, 199 to 200 (NL), 216 to 218 (SVF), Arg231, and 292 to 295 (RPGD) contribute to the substrate site.

The protein belongs to the NAD(P)-dependent epimerase/dehydratase family. Homodimer. The cofactor is NAD(+).

It carries out the reaction UDP-alpha-D-glucose = UDP-alpha-D-galactose. The protein operates within carbohydrate metabolism; galactose metabolism. Its function is as follows. Involved in the metabolism of galactose. Catalyzes the conversion of UDP-galactose (UDP-Gal) to UDP-glucose (UDP-Glc) through a mechanism involving the transient reduction of NAD. The polypeptide is UDP-glucose 4-epimerase (galE) (Pasteurella multocida (strain Pm70)).